The chain runs to 365 residues: Protein BIIDXI (365 aa).

Residues 1-21 (MKEMGVIVLLLLHSFFYVAFC) form the signal peptide. N-linked (GlcNAc...) asparagine glycans are attached at residues asparagine 48, asparagine 121, and asparagine 208.

Interacts with PME3. In terms of tissue distribution, mainly expressed in vascular tissues of roots, leaves, stamens and petals.

It is found in the secreted. The protein resides in the cell wall. In terms of biological role, together with At5g11420, acts as a positive regulator of PME3 activity during several developmental processes, including reproductive organ development, hypocotyls elongation, seed germination and endosperm (testa) rupture at the micropyle, probably by modulating the pectin methylation status in cell walls. Involved in the regulation of pectin methylation degree to modulate cell wall physiology during cell separation, hypocotyl growth and embryo development. Required during embryo development, especially to regulate homogalacturonans (HG) methyl esterification in endosperm cell walls, a process related to embryo bending. Also implicated in hypocotyl growth and gravitropic response via the regulation of auxin efflux. Also regulates cell wall pectin upon root-knot nematode Meloidogyne incognita infection. The polypeptide is Protein BIIDXI (Arabidopsis thaliana (Mouse-ear cress)).